The primary structure comprises 349 residues: Probable transporter vicT (349 aa).

One can recognise an EamA domain in the interval 25-153 (IAAALLHALA…TALAGVVLVL (129 aa)). 9 helical membrane-spanning segments follow: residues 49-69 (PFTV…AYLW), 89-109 (AAGG…LSLS), 111-131 (ATVL…YWEG), 133-153 (TFAF…VLVL), 179-199 (LKGV…FSAM), 215-235 (FGVS…EVVW), 244-264 (LLAI…AGLG), 269-289 (RVTI…WAIW), and 294-314 (NVLT…PYLF).

This sequence belongs to the TPT transporter family. SLC35D subfamily.

The protein resides in the membrane. Probable transporter; part of the gene cluster that mediates the biosynthesis of the secondary metabolite victorin, the molecular basis for Victoria blight of oats. This is Probable transporter vicT from Bipolaris victoriae (strain FI3) (Victoria blight of oats agent).